A 340-amino-acid chain; its full sequence is Anthocyanidin reductase (340 aa).

NADP(+) is bound by residues Lys-49 and Tyr-169.

It belongs to the NAD(P)-dependent epimerase/dehydratase family. Dihydroflavonol-4-reductase subfamily. As to quaternary structure, homo- or heterodimer. Flowers and young siliques. Detected specifically in the endothelium of seed coat.

It carries out the reaction a (2R,3R)-flavan-3-ol + 2 NAD(+) = an anthocyanidin with a 3-hydroxy group + 2 NADH + 2 H(+). The catalysed reaction is a (2R,3R)-flavan-3-ol + 2 NADP(+) = an anthocyanidin with a 3-hydroxy group + 2 NADPH + 2 H(+). Its pathway is secondary metabolite biosynthesis; flavonoid biosynthesis. Its activity is regulated as follows. Inhibited by (+)-catechin, quercetin and (+)- and (-)-dihydroquercetin. Not inhibited by salt. Positive cooperativity with NADPH acting as cosubstrate and modulator. Functionally, involved in the biosynthesis of condensed tannins. Converts cyanidin into (-)-epicatechin as the major product. The polypeptide is Anthocyanidin reductase (BAN) (Arabidopsis thaliana (Mouse-ear cress)).